Here is a 150-residue protein sequence, read N- to C-terminus: Transcription antitermination protein NusB (150 aa).

The protein belongs to the NusB family.

Its function is as follows. Involved in transcription antitermination. Required for transcription of ribosomal RNA (rRNA) genes. Binds specifically to the boxA antiterminator sequence of the ribosomal RNA (rrn) operons. This is Transcription antitermination protein NusB from Streptococcus equi subsp. zooepidemicus (strain H70).